Consider the following 636-residue polypeptide: Serine/threonine-protein kinase hal4 (636 aa).

The span at 1–11 (MGEKDKLHEIS) shows a compositional bias: basic and acidic residues. Disordered stretches follow at residues 1-167 (MGEK…AGVV) and 181-261 (AASP…PSSA). The segment covering 33 to 45 (EPPPPSSQQPPST) has biased composition (pro residues). Polar residues-rich tracts occupy residues 56–92 (ALKQ…QQPL) and 113–124 (NPSRHVSSTSNK). The segment covering 140–155 (PSGSVPPSASVSRANS) has biased composition (low complexity). Polar residues predominate over residues 182–226 (ASPNPSTPSNGPAPVSTTATPSRNPVTRLQRIFSQNSVSRQNSRT). Position 218 is a phosphoserine (S218). Positions 234–261 (NTEETNSTGGSETGGAANSSSTSNPSSA) are enriched in low complexity. Residues T238 and T241 each carry the phosphothreonine modification. At S299 the chain carries Phosphoserine. Residues 351 to 623 (GRCQEVIGRG…AKQIMKSEWV (273 aa)) enclose the Protein kinase domain. Residues 357-365 (IGRGAFGVV) and K385 each bind ATP. D481 functions as the Proton acceptor in the catalytic mechanism.

The protein belongs to the protein kinase superfamily. Ser/Thr protein kinase family. Interacts with sty1.

The protein resides in the cytoplasm. The catalysed reaction is L-seryl-[protein] + ATP = O-phospho-L-seryl-[protein] + ADP + H(+). It catalyses the reaction L-threonyl-[protein] + ATP = O-phospho-L-threonyl-[protein] + ADP + H(+). Promotes K(+) uptake, by the potassium transporter trk1-trk2, which leads to the subsequent cellular resistance to toxic cations such as Na(+), Li(+) and Ca(2+). This is Serine/threonine-protein kinase hal4 (hal4) from Schizosaccharomyces pombe (strain 972 / ATCC 24843) (Fission yeast).